The chain runs to 214 residues: Cytochrome b (214 aa).

4 helical membrane passes run 31–51 (FGSM…FLAI), 75–96 (WIMQ…YIHI), 111–131 (WLSG…GYVL), and 176–196 (FFAL…AHIL). Xaa81 and His95 together coordinate heme b. Heme b is bound by residues His180 and His194. His199 serves as a coordination point for a ubiquinone.

The protein belongs to the cytochrome b family. As to quaternary structure, the cytochrome bc1 complex contains 3 respiratory subunits (MT-CYB, CYC1 and UQCRFS1), 2 core proteins (UQCRC1 and UQCRC2) and probably 6 low-molecular weight proteins. The cofactor is heme b.

It localises to the mitochondrion inner membrane. Component of the ubiquinol-cytochrome c reductase complex (complex III or cytochrome b-c1 complex) that is part of the mitochondrial respiratory chain. The b-c1 complex mediates electron transfer from ubiquinol to cytochrome c. Contributes to the generation of a proton gradient across the mitochondrial membrane that is then used for ATP synthesis. This Bothriechis schlegelii (Eyelash palm pitviper) protein is Cytochrome b (MT-CYB).